The following is a 563-amino-acid chain: uncharacterized protein (563 aa).

Over 1–13 (MASRSCICQVSAG) the chain is Cytoplasmic. A helical transmembrane segment spans residues 14 to 34 (IIFLIGAALLVAGLVIVLNVF). The Lumenal portion of the chain corresponds to 35 to 528 (PNIVNNQIND…LFTPVSTVNT (494 aa)). Asparagine 43, asparagine 112, asparagine 133, asparagine 188, asparagine 265, asparagine 295, asparagine 315, and asparagine 502 each carry an N-linked (GlcNAc...) asparagine glycan. Residues 529 to 549 (ICWIAVGLGAGLIALSIVMVI) form a helical membrane-spanning segment. Residues 550–563 (VSFCCFRDEHHKTS) lie on the Cytoplasmic side of the membrane.

Belongs to the CD36 family.

Its subcellular location is the membrane. This is an uncharacterized protein from Caenorhabditis elegans.